Reading from the N-terminus, the 138-residue chain is Spermatid nuclear transition protein 4 (138 aa).

Basic and acidic residues predominate over residues 1–11 (AKVSRKPREPR). Positions 1–138 (AKVSRKPREP…QGVTRRGRRY (138 aa)) are disordered. Position 4 is a phosphoserine; by PKC (Ser4). Positions 5-23 (RKPREPRTAVTQSTRRIKR) match the Nuclear localization signal motif. 3 stretches are compositionally biased toward basic residues: residues 19–34 (RRIK…RSRG), 43–57 (MKIK…RRKI), and 65–74 (KKAKKARKHF). Thr26 carries the phosphothreonine; by PKA modification. The short motif at 54 to 72 (RRKIQTSAGQPKKAKKARK) is the Nuclear localization signal element. The segment covering 86–101 (NKKTNQNKRQNQNKRQ) has biased composition (low complexity). The span at 120 to 131 (PTTSCKWCSQGV) shows a compositional bias: polar residues.

Its subcellular location is the nucleus. The protein localises to the chromosome. Functionally, involved in nuclear basic protein transition: histones are replaced by spermatid specific proteins which are themselves replaced by protamines in late spermatids. This Sus scrofa (Pig) protein is Spermatid nuclear transition protein 4 (TNP4).